Here is a 314-residue protein sequence, read N- to C-terminus: tRNA pseudouridine synthase B (314 aa).

Substrate is bound at residue H43. D48 acts as the Nucleophile in catalysis. Residues Y76, Y179, and L200 each contribute to the substrate site.

It belongs to the pseudouridine synthase TruB family. Type 1 subfamily.

The enzyme catalyses uridine(55) in tRNA = pseudouridine(55) in tRNA. In terms of biological role, responsible for synthesis of pseudouridine from uracil-55 in the psi GC loop of transfer RNAs. This is tRNA pseudouridine synthase B from Salmonella paratyphi B (strain ATCC BAA-1250 / SPB7).